Consider the following 718-residue polypeptide: Polyribonucleotide nucleotidyltransferase (718 aa).

Asp497 and Asp503 together coordinate Mg(2+). In terms of domain architecture, KH spans 564–623; the sequence is PRLLTMKIDPEQIGLVIGPGGKTIKGITEQTGSKIDIADDGTVTIAALEAEKAEKAKQII. Positions 633-701 constitute an S1 motif domain; it reads GEVYMGRVTR…AKGRLNLTRL (69 aa).

The protein belongs to the polyribonucleotide nucleotidyltransferase family. The cofactor is Mg(2+).

Its subcellular location is the cytoplasm. It carries out the reaction RNA(n+1) + phosphate = RNA(n) + a ribonucleoside 5'-diphosphate. Involved in mRNA degradation. Catalyzes the phosphorolysis of single-stranded polyribonucleotides processively in the 3'- to 5'-direction. This Rippkaea orientalis (strain PCC 8801 / RF-1) (Cyanothece sp. (strain PCC 8801)) protein is Polyribonucleotide nucleotidyltransferase.